Consider the following 406-residue polypeptide: Imidazolonepropionase (406 aa).

Residues histidine 65 and histidine 67 each contribute to the Fe(3+) site. Histidine 65 and histidine 67 together coordinate Zn(2+). Residues arginine 74, tyrosine 137, and histidine 170 each coordinate 4-imidazolone-5-propanoate. Tyrosine 137 provides a ligand contact to N-formimidoyl-L-glutamate. Histidine 235 serves as a coordination point for Fe(3+). Histidine 235 is a binding site for Zn(2+). Glutamine 238 contributes to the 4-imidazolone-5-propanoate binding site. Aspartate 310 lines the Fe(3+) pocket. Aspartate 310 is a Zn(2+) binding site. The N-formimidoyl-L-glutamate site is built by asparagine 312 and glycine 314. A 4-imidazolone-5-propanoate-binding site is contributed by threonine 315.

This sequence belongs to the metallo-dependent hydrolases superfamily. HutI family. Zn(2+) serves as cofactor. It depends on Fe(3+) as a cofactor.

Its subcellular location is the cytoplasm. The enzyme catalyses 4-imidazolone-5-propanoate + H2O = N-formimidoyl-L-glutamate. Its pathway is amino-acid degradation; L-histidine degradation into L-glutamate; N-formimidoyl-L-glutamate from L-histidine: step 3/3. Its function is as follows. Catalyzes the hydrolytic cleavage of the carbon-nitrogen bond in imidazolone-5-propanoate to yield N-formimidoyl-L-glutamate. It is the third step in the universal histidine degradation pathway. The polypeptide is Imidazolonepropionase (Vibrio vulnificus (strain YJ016)).